The sequence spans 154 residues: Probable prefoldin subunit 5 (154 aa).

This sequence belongs to the prefoldin subunit alpha family. As to quaternary structure, heterohexamer of two PFD-alpha type and four PFD-beta type subunits. Interacts with byr1.

Its subcellular location is the cytoplasm. Binds specifically to cytosolic chaperonin (c-CPN) and transfers target proteins to it. Binds to nascent polypeptide chain and promotes folding in an environment in which there are many competing pathways for nonnative proteins. Required for normal cytoskeletal function and when bound to byr1, is involved in the regulation of sexual differentiation. This Schizosaccharomyces pombe (strain 972 / ATCC 24843) (Fission yeast) protein is Probable prefoldin subunit 5 (bob1).